The primary structure comprises 321 residues: Putative membrane-bound redox modulator Alx (321 aa).

At 1-6 (MNTVGT) the chain is on the periplasmic side. Residues 7–27 (PLLWGGFAVVVAIMLAIDLLL) traverse the membrane as a helical segment. Over 28–43 (QGRRGAHAMTMKQAAA) the chain is Cytoplasmic. A helical membrane pass occupies residues 44–64 (WSLVWVTLSLLFNAAFWWYLV). The Periplasmic portion of the chain corresponds to 65-89 (QTEGRAVADPQALAFLTGYLIEKSL). Residues 90–110 (AVDNVFVWLMLFSYFSVPAAL) traverse the membrane as a helical segment. At 111–113 (QRR) the chain is on the cytoplasmic side. The helical transmembrane segment at 114–134 (VLVYGVLGAIVLRTIMIFTGS) threads the bilayer. Residue Trp-135 is a topological domain, periplasmic. Residues 136-156 (LISQFDWILYIFGAFLLFTGV) traverse the membrane as a helical segment. Residues 157–198 (KMALAHEDESGIGDKPLVRWLRGHLRMTDTIDNEHFFVRKNG) lie on the Cytoplasmic side of the membrane. Residues 199–219 (LLYATPLMLVLILVELSDVIF) traverse the membrane as a helical segment. Residues 220–225 (AVDSIP) lie on the Periplasmic side of the membrane. A helical membrane pass occupies residues 226–246 (AIFAVTTDPFIVLTSNLFAIL). The Cytoplasmic portion of the chain corresponds to 247-261 (GLRAMYFLLAGVAER). Residues 262-282 (FSMLKYGLAVILVFIGIKMLI) form a helical membrane-spanning segment. At 283-286 (VDFY) the chain is on the periplasmic side. A helical transmembrane segment spans residues 287–307 (HIPIAVSLGVVFGILVMTFII). Over 308 to 321 (NAWVNYRHDKQRGG) the chain is Cytoplasmic.

This sequence belongs to the TerC family.

The protein localises to the cell inner membrane. Has been proposed to be a redox modulator. The protein is Putative membrane-bound redox modulator Alx of Escherichia coli (strain K12).